A 909-amino-acid chain; its full sequence is Phosphoenolpyruvate carboxylase (909 aa).

Residues His-151 and Lys-578 contribute to the active site.

Belongs to the PEPCase type 1 family. Mg(2+) serves as cofactor.

The enzyme catalyses oxaloacetate + phosphate = phosphoenolpyruvate + hydrogencarbonate. Functionally, forms oxaloacetate, a four-carbon dicarboxylic acid source for the tricarboxylic acid cycle. The sequence is that of Phosphoenolpyruvate carboxylase from Caulobacter vibrioides (strain ATCC 19089 / CIP 103742 / CB 15) (Caulobacter crescentus).